The following is a 322-amino-acid chain: DNA primase small subunit PriS (322 aa).

Catalysis depends on residues Asp-86, Asp-88, and Asp-226.

This sequence belongs to the eukaryotic-type primase small subunit family. As to quaternary structure, heterodimer of a small subunit (PriS) and a large subunit (PriL). It depends on Mg(2+) as a cofactor. Mn(2+) is required as a cofactor.

Functionally, catalytic subunit of DNA primase, an RNA polymerase that catalyzes the synthesis of short RNA molecules used as primers for DNA polymerase during DNA replication. The small subunit contains the primase catalytic core and has DNA synthesis activity on its own. Binding to the large subunit stabilizes and modulates the activity, increasing the rate of DNA synthesis while decreasing the length of the DNA fragments, and conferring RNA synthesis capability. The DNA polymerase activity may enable DNA primase to also catalyze primer extension after primer synthesis. May also play a role in DNA repair. The sequence is that of DNA primase small subunit PriS from Thermoplasma acidophilum (strain ATCC 25905 / DSM 1728 / JCM 9062 / NBRC 15155 / AMRC-C165).